We begin with the raw amino-acid sequence, 463 residues long: NADH-quinone oxidoreductase subunit N (463 aa).

14 helical membrane passes run 5–25, 34–54, 72–92, 99–119, 120–140, 154–174, 196–216, 230–250, 259–279, 286–303, 314–334, 356–376, 393–413, and 432–452; these read LLYGLLPEHILLGLILVLMLL, AGSALFIASLLAGAGVLVMQL, FSEIGRLIIVSCGAILGVYSL, KYWILIASSLLGAMIILDSAG, FISLFMGIEILSLPGFALMVL, YLLLSSVATALVLFGLSLVYG, LAASVMILSGFFLKASVFPFH, VTAFLASIVKAAVVLGLVRIL, AVTVIALLSMLSMFYGNITAI, KMLAYSSISHAGYMMFAL, LLYYVAVYAVTTITACACFSI, AILLSLCVLSLAGIPPLPGFL, VAVLAFVASYIGTFFYLGVVL, and LCWTWGGALLGTLALALFMLL.

The protein belongs to the complex I subunit 2 family. As to quaternary structure, NDH-1 is composed of 14 different subunits. Subunits NuoA, H, J, K, L, M, N constitute the membrane sector of the complex.

It is found in the cell inner membrane. It catalyses the reaction a quinone + NADH + 5 H(+)(in) = a quinol + NAD(+) + 4 H(+)(out). In terms of biological role, NDH-1 shuttles electrons from NADH, via FMN and iron-sulfur (Fe-S) centers, to quinones in the respiratory chain. The immediate electron acceptor for the enzyme in this species is believed to be ubiquinone. Couples the redox reaction to proton translocation (for every two electrons transferred, four hydrogen ions are translocated across the cytoplasmic membrane), and thus conserves the redox energy in a proton gradient. This Pelobacter propionicus (strain DSM 2379 / NBRC 103807 / OttBd1) protein is NADH-quinone oxidoreductase subunit N.